Consider the following 297-residue polypeptide: Salivary glue protein Sgs-4 (297 aa).

The N-terminal stretch at 1-21 (MRLELLVVLLVGLAALAPSGS) is a signal peptide. A run of 21 repeats spans residues 26–32 (TEPPRCE), 33–39 (TEPPRCE), 40–46 (TEPPRCE), 47–53 (TEPPRCE), 54–60 (TEPPRCE), 61–67 (TTTPKCE), 68–74 (TTPPTCR), 75–81 (TEPPTCK), 82–88 (TEPPTCR), 89–95 (TEPPTCK), 96–102 (TKPPTCR), 103–109 (TEPPTCR), 110–116 (TEPPTCK), 117–123 (TKPPTCK), 124–130 (TEPPTCK), 131–137 (TEPPTCR), 138–144 (TEPPTCK), 145–151 (TEPPTCR), 152–158 (TEPPTCK), 159–165 (TEPPTCK), and 166–172 (TEPPTCK). The tract at residues 26-84 (TEPPRCETEPPRCETEPPRCETEPPRCETEPPRCETTTPKCETTPPTCRTEPPTCKTEP) is disordered. Residues 26 to 179 (TEPPRCETEP…TCKTEPPCEK (154 aa)) are 22 X 7 AA approximate tandem repeats of T-[ETK]-[PT]-P-[RKT]-C-[ERK]. Positions 27-58 (EPPRCETEPPRCETEPPRCETEPPRCETEPPR) are enriched in basic and acidic residues. Positions 59 to 84 (CETTTPKCETTPPTCRTEPPTCKTEP) are enriched in low complexity. Over residues 141–174 (PTCKTEPPTCRTEPPTCKTEPPTCKTEPPTCKTE) the composition is skewed to low complexity. Disordered regions lie at residues 141–218 (PTCK…SGCG) and 243–297 (PDSK…KGGC). A 22; approximate repeat occupies 173–179 (TEPPCEK). 2 stretches are compositionally biased toward basic residues: residues 181–208 (CTKR…HHNR) and 282–291 (NTTKKPRKTQ).

As to expression, salivary gland.

It localises to the secreted. The polypeptide is Salivary glue protein Sgs-4 (Sgs4) (Drosophila melanogaster (Fruit fly)).